The following is an 84-amino-acid chain: Esculentin-1SIa (84 aa).

The signal sequence occupies residues 1–22 (MFTLKKPLLLIVLLGIISLSLC). Positions 23 to 36 (EQERAADEDEGSEI) are cleaved as a propeptide — removed in mature form. C78 and C84 form a disulfide bridge.

As to expression, expressed by the skin glands.

It localises to the secreted. Its function is as follows. Has antimicrobial activity against Gram-negative bacterium E.coli ATCC 8739 (MIC=6.3 ug), against Gram positive bacteria S.aureus ATCC 6538 (MIC=3.1 ug), methicillin-resistant S.aureus ATCC 43300 (MIC=25 ug) and B.subtilis ATCC 6633 (MIC=25 ug). Has no activity against fungus C.albicans ATCC 90028. This is Esculentin-1SIa from Odorrana ishikawae (Ishikawa's frog).